The sequence spans 906 residues: Envelope glycoprotein B (906 aa).

The N-terminal stretch at 1–31 (MESRIWCLVVCVNLCIVCLGAAVSSSSTSHA) is a signal peptide. The segment covering 29 to 46 (SHATSSTHNGSHTSRTTS) has biased composition (low complexity). The tract at residues 29–51 (SHATSSTHNGSHTSRTTSAQTRS) is disordered. Over 32 to 750 (TSSTHNGSHT…EGVATFLKNP (719 aa)) the chain is Virion surface. N-linked (GlcNAc...) asparagine; by host glycosylation is found at N37, N68, N73, and N85. Cystine bridges form between C94–C550, C111–C506, C185–C250, C246–C250, and C344–C391. An involved in fusion and/or binding to host membrane region spans residues 152–158 (SYAYIYT). N208 carries N-linked (GlcNAc...) asparagine; by host glycosylation. The involved in fusion and/or binding to host membrane stretch occupies residues 237–244 (GSTWLYRE). N-linked (GlcNAc...) asparagine; by host glycans are attached at residues N281, N286, N302, N341, N383, N405, N409, N417, N447, N452, N464, N465, N554, and N585. Residues C573 and C610 are joined by a disulfide bond. Hydrophobic membrane proximal region stretches follow at residues 696–748 (VEDK…TFLK) and 727–747 (VAIG…ATFL). The chain crosses the membrane as a helical span at residues 751 to 771 (FGAFTIILVAIAVVIITYLIY). The Intravirion portion of the chain corresponds to 772-906 (TRQRRLCTQP…LKDSDEEENV (135 aa)). Composition is skewed to polar residues over residues 797–809 (VTSG…SLQA) and 859–876 (RAQQ…GTQD). Disordered regions lie at residues 797 to 837 (VTSG…TAAP) and 856 to 906 (AEQR…EENV). A compositionally biased stretch (basic and acidic residues) spans 877–886 (KGQKPNLLDR). An Internalization motif motif is present at residues 894 to 897 (YRHL).

This sequence belongs to the herpesviridae glycoprotein B family. In terms of assembly, homotrimer; disulfide-linked. Binds to heparan sulfate proteoglycans. Interacts with gH/gL heterodimer. Interacts with host TLR1 and TLR2. Interacts with host C-type lectin CD209/DC-SIGN. Interacts with host ITGB1, EGFR, and PDGFRA. A proteolytic cleavage by host furin generates two subunits that remain linked by disulfide bonds.

The protein localises to the virion membrane. It is found in the host cell membrane. It localises to the host endosome membrane. Its subcellular location is the host Golgi apparatus membrane. Its function is as follows. Envelope glycoprotein that plays a role in host cell entry, cell to-cell virus transmission, and fusion of infected cells. May be involved in the initial attachment via binding to heparan sulfate together with the gM/gN complex that binds heparin with higher affinity. Interacts with host integrin ITGB1, PDGFRA and EGFR that likely serve as postattachment entry receptors. Also participates in the fusion of viral and cellular membranes leading to virus entry into the host cell. Membrane fusion is mediated by the fusion machinery composed at least of gB and the heterodimer gH/gL. The chain is Envelope glycoprotein B from Human cytomegalovirus (strain AD169) (HHV-5).